The sequence spans 3149 residues: MSNGDWGQSQRTRGTGPVRGIRTMDVNAPGGGSGGSALRILGTASCNQAHCKFGRFAGIQCVSNCVLYLVKSFLAGRPLTSRPELDEVLDEGARLDALMRQSGILKGHEMAQLTDVPSSVVLRGGGRVHIYRSAEIFGLVLFPAQIANSAVVQSLAEVLHGSYNGVAQFILYICDIYAGAIIIETDGSFYLFDPHCQKDAAPGTPAHVRVSTYAHDILQYVGAPGAQYTCVHLYFLPEAFETEDPRIFMLEHYGVYDFYEANGSGFDLVGPELVSSDGEAAGTPGADSSPPVMLPFERRIIPYNLRPLPSRSFTSDSFPAARYSPAKTNSPPSSPASAAPASAAPASAAPASAAPASAAPASAAPASAAPASAAPASSPPLFIPIPGLGHTPGVPAPSTPPRASSGAAPQTPKRKKGLGKDSPHKKPTSGRRLPLSSTTDTEDDQLPRTHVPPHRPPSAARLPPPVIPIPHQSPPASPTPHPAPVSTIAPSVTPSPRLPLQIPIPLPQAAPSNPKIPLTTPSPSPTAAAAPTTTTLSPPPTQQQPPQSAAPAPSPLLPQQQPTPSAAPAPSPLLPQQQPPPSAARAPSPLPPQQQPLPSATPAPPPAQQLPPSATTLEPEKNHPPAADRAGTEISPSPPFGQQPSFGDDASGGSGLVRYLSDLEEPFLSMSDSEEAESDLASDIPTTEDEDMFEDEVFSNSLESGSSAPTSPITLDTARSQYYQTTFDIETPEMDFVPLESNIARIAGHTYQEQAIVYDPASNREVPEADALSMIDYLLVTVVLEQGLIRSRDRSSVLNLLEFLKDWSGHLQVPTLDLEQLLTSELNIQNLANMLSENKGRAGEFHKHLAAKLEACLPSLATKDAVRVDAGAKMLAEIPQLAESDDGKFDLEAARRRLTDLLSGGDQEAGEGGGEPEDNSIYRGPHVDVPLVLDDESWKRLLSLAEAARTAVARQQAGVDEEDVRFLALLTAIEYGAPPAASVPPFVHNVAVRSKNAALHVRRCTADIRDKVASAASDYLSYLEDPSLPTVMDFDDLLTHLRHTCQIIASLPLLNIRYTSIEWDYRELLYLGTALSDMSGIPWPLERVEEDDPSIAPLPEFETVAKKQKELETTRENEKRLRTILDDIEAMLGLAGVASAPGAPISPASPSATPANHDNPEATPPLADTAALTIPVIEKYIANAGSIVGAAKNPTYIRLRDTIQQIVRSKKYLMNILKSITFYTIDNYIASFEESIDHLYRDLPVLDPEVQDGIDRILDPMVSEALHTFEMGNRLTLEPARLVALQNFATHSTLKETAAAVNLLPGLLAVYDATITGQAPEDALRLLSGLQNQLSQTLIPGKLKKRFLSYLQKLKNNNNDQLRQKEVQAWRLEAEGFKPATEEQLEAFLDTAPNKELKRQYEKKLRQLMETGRKEKEKLREQEDKERQERRAREANEAWARIRKALGARPEPAPTSPDDWNTLLASLLPDNTDSAAAAAAAVARNTDILDSLTQILAAMLLGITRVRRERLRSLLVDDGGAAERMEAAEPGWFTDIETGPLARLDAWPATPAATAKEGGGGRGAEEAAGALFRARTAADAIRSALAQTRQALQSPDMKSAVVNTDLEAPYAEYERGLAGLLEKRRAAEAALTAIVSEYVDRTLPEATNDPGQANLPPPPTIPQATAPPRLASDSALWPKKPQLLTRRERDDLLQATGDFFSELLTEAEAAEVRALEEQVRESQTLMAKAHEMAASTRRGFHTALEAVLSRSRDEAPDDELRSLLPSPPKAPVQAPLEAALARAAAGNGSWPYRKSLAAAKWIRGICEAVRGLSEGALALAGGAGAWLNLAAAADGEIHELTRLLEVEGMAQNSMDGMEELRLALATLDPKRVAGGKETVADWKRRLSRLEAIIQEAQEESQLQGTLQDLVTQARGHTDPRQLKIVVEAARGLALGASAGSQYALLKDKLLRYASAKQSFLAFYETAQPTVFVKHPLTNNLPLLITISAPPTGWGNGAPTRRAQFLAAAGPAKYAGTLWLETESPCDPLNPAYVSADTQEPLNYIPVYHNFLEYVMPTVLENPEAFSLTPAGRPQAIGPPQDDQERRRRTLASVASARLSAAAADSYWDTWPDVESNAGELLREYVSAPKALMEDLADNPIVAMTLLAHASLIASRNHPPYPAPATDREVILLEQREMMALLVGTHPAYAAAFLGAPSFYAGLGLVSALARDGGLGDLLSDSVLTYRLVRSPASGRGGMPSTTRGSNDGEDARRLTRHRIAGPPTGFIFFQDAWEEMDTRAALWPHPEFLGLVHNQSTARARACMLLLARRCFAPEALQQLWHSLRPLEGPVAFQDYLRDFVKQAYTRGEELPRAEGLEVPRETPSSYGTVTGRALRNLMPYGTPITGPKRGSGDTIPVSVFEAAVAAAFLGRPLTLFVSSQYLFNLKTLGQVRVVAPLLYCDGHSEPFRSLVETISLNFLQDLDGYSESFEPEMSIFARQAVWLRELLTEARAAKPKEARPPTVAILANRKNIIWKCFTYRHNLPDVQFYFNAAGASRWPTDVLNPSFYEHEDPPLPVGYQLPPNPRNVQELFSGFPPRVGHGLVSGDGFQSADNTPASSDRLQQLGGGETDQGEKGSTTAESEASGPPSPQSPLLEKVAPGRPRDWLSPTSSPRDVTVTPGLAAPITLPGPRLMARPYFGAETRASESPDRSPGSSPRPWPKDSLELLPQPAPQQPPSSPWASEQGPIVYTLSPHSTPSTASGSQKKHTIQIPGLVPSQKPSYPPSAPYKPGQSTGGIAPTPSAASLTTFGLQPQDTQASSQDPPYGHSIMQREKKQQGGREEAAEIRPSATRLPTAVGLRPRAPVVAAGAAASATPAFDPGEAPSGFPIPQAPALGSGLAAPAHTPVGALAPRPQKTQAQRPQDAAALPTPTIKAVGARPVPKATGALAAGARPRGQPTAAPPSAASPPRVSLPVRSRQQQSPAIPLPPMHSGSEPGARPEVRLSQYRHAGPQTYTVRKEAPPSAASQLPKMPKCKDSMYYPPSGSARYPAPFQALSFSQSVASPAPSSDQTTLLWNTPSVVTQFLSIEDIIREVVTGGSTSGDLVVPSGSPSSLSTAAPEQDLRYSLTLSQASRVLSRFVSQLRRKLERSTHRLIADLERLKFLYL.

A compositionally biased stretch (polar residues) spans 1–13 (MSNGDWGQSQRTR). The segment at 1–30 (MSNGDWGQSQRTRGTGPVRGIRTMDVNAPG) is disordered. The interval 1 to 268 (MSNGDWGQSQ…YEANGSGFDL (268 aa)) is deubiquitination activity. The Peptidase C76 domain maps to 41 to 258 (LGTASCNQAH…MLEHYGVYDF (218 aa)). Residues Cys61, Asp193, and His195 contribute to the active site. The interval 319–341 (PAARYSPAKTNSPPSSPASAAPA) is disordered. 8 consecutive repeat copies span residues 335–339 (PASAA), 340–344 (PASAA), 345–349 (PASAA), 350–354 (PASAA), 355–359 (PASAA), 360–364 (PASAA), 365–369 (PASAA), and 370–374 (PASAA). Residues 335–374 (PASAAPASAAPASAAPASAAPASAAPASAAPASAAPASAA) are 8 X 5 AA repeats of P-A-S-A-A. Disordered regions lie at residues 382–656 (FIPI…GSGL), 901–923 (LLSGGDQEAGEGGGEPEDNSIYR), 1143–1166 (APISPASPSATPANHDNPEATPPL), 1412–1434 (GRKEKEKLREQEDKERQERRARE), 1644–1677 (PEATNDPGQANLPPPPTIPQATAPPRLASDSALW), 2583–2839 (GLVS…PTAV), 2852–2981 (AAAS…PGAR), and 2995–3019 (QTYTVRKEAPPSAASQLPKMPKCKD). The segment covering 462 to 483 (LPPPVIPIPHQSPPASPTPHPA) has biased composition (pro residues). 2 stretches are compositionally biased toward low complexity: residues 509–536 (AAPSNPKIPLTTPSPSPTAAAAPTTTTL) and 544–564 (QPPQSAAPAPSPLLPQQQPTP). Positions 554 to 584 (SPLLPQQQPTPSAAPAPSPLLPQQQPPPSAA) are interaction with inner tegument protein. Positions 565 to 609 (SAAPAPSPLLPQQQPPPSAARAPSPLPPQQQPLPSATPAPPPAQQ) are enriched in pro residues. A compositionally biased stretch (low complexity) spans 1143-1155 (APISPASPSATPA). Polar residues predominate over residues 2592 to 2603 (SADNTPASSDRL). Residues 2711-2720 (QPAPQQPPSS) are compositionally biased toward pro residues. 2 stretches are compositionally biased toward polar residues: residues 2734-2745 (SPHSTPSTASGS) and 2784-2804 (SAASLTTFGLQPQDTQASSQD). A compositionally biased stretch (basic and acidic residues) spans 2812 to 2827 (MQREKKQQGGREEAAE). Positions 2874–2885 (APALGSGLAAPA) are enriched in low complexity.

This sequence belongs to the herpesviridae large tegument protein family. In terms of assembly, interacts with host CUL1 and CUL4A; these interactions inhibit the E3 ligase activity of cullins. Interacts with inner tegument protein. Interacts with capsid vertex specific component CVC2. Interacts with the major capsid protein/MCP. Interacts with host TRIM25 and YWHAZ.

Its subcellular location is the virion tegument. It localises to the host cytoplasm. The protein localises to the host nucleus. It catalyses the reaction Thiol-dependent hydrolysis of ester, thioester, amide, peptide and isopeptide bonds formed by the C-terminal Gly of ubiquitin (a 76-residue protein attached to proteins as an intracellular targeting signal).. Its function is as follows. Large tegument protein that plays multiple roles in the viral cycle. During viral entry, remains associated with the capsid while most of the tegument is detached and participates in the capsid transport toward the host nucleus. Plays a role in the routing of the capsid at the nuclear pore complex and subsequent uncoating. Within the host nucleus, acts as a deneddylase and promotes the degradation of nuclear CRLs (cullin-RING ubiquitin ligases) and thereby stabilizes nuclear CRL substrates, while cytoplasmic CRLs remain unaffected. These modifications prevent host cell cycle S-phase progression and create a favorable environment allowing efficient viral genome replication. Participates later in the secondary envelopment of capsids. Indeed, plays a linker role for the association of the outer viral tegument to the capsids together with the inner tegument protein. Counteracts host TLR-mediated NF-kappa-B activation through both MYD88 and TICAM1-dependent pathways by interfering with 'Lys-63'- and 'Lys-48'-linked ubiquitination of signaling intermediates such as TRAF6 and IKBKG. Inhibits type I interferon production by forming a tri-molecular complex with host TRIM25 and 14-3-3 thereby promoting TRIM25 autoubiquitination and sequestration of the ligase into inactive protein aggregates. In turn, host RIGI is recruited to the complex but ubiquitination is severely impaired leading to inhibition of the pathway. Also catalyzes the removal of 'Lys-48'- and 'Lys-63'-linked ubiquitin chains on host TBK1 and STING1 suppressing cGAS-STING signaling in addition to the RIGI-MAVS pathway. Inhibits selective autophagy by deubiquitinating host SQSTM1. In turn, decreased SQSTM1 ubiquitination fails to recruit LC3 to SQSTM1-positive aggregates. In the host nucleus, deubiquitinates topoisomerase II subunits TOP2A and TOP2B thereby stabilizing SUMOylated TOP2 which halts the DNA damage response to TOP2-induced double strand DNA breaks and promotes cell survival. In Epstein-Barr virus (strain B95-8) (HHV-4), this protein is Large tegument protein deneddylase.